We begin with the raw amino-acid sequence, 423 residues long: Kynureninase (423 aa).

Residues L105, S106, 133-136 (FPSD), D218, H221, and Y243 each bind pyridoxal 5'-phosphate. N6-(pyridoxal phosphate)lysine is present on K244. Pyridoxal 5'-phosphate contacts are provided by W273 and N301.

Belongs to the kynureninase family. In terms of assembly, homodimer. Pyridoxal 5'-phosphate serves as cofactor.

The catalysed reaction is L-kynurenine + H2O = anthranilate + L-alanine + H(+). The enzyme catalyses 3-hydroxy-L-kynurenine + H2O = 3-hydroxyanthranilate + L-alanine + H(+). Its pathway is amino-acid degradation; L-kynurenine degradation; L-alanine and anthranilate from L-kynurenine: step 1/1. It participates in cofactor biosynthesis; NAD(+) biosynthesis; quinolinate from L-kynurenine: step 2/3. Catalyzes the cleavage of L-kynurenine (L-Kyn) and L-3-hydroxykynurenine (L-3OHKyn) into anthranilic acid (AA) and 3-hydroxyanthranilic acid (3-OHAA), respectively. The sequence is that of Kynureninase from Xanthomonas oryzae pv. oryzae (strain PXO99A).